Here is a 311-residue protein sequence, read N- to C-terminus: Pyrimidine-specific ribonucleoside hydrolase RihA (311 aa).

His-240 is a catalytic residue.

It belongs to the IUNH family. RihA subfamily.

Hydrolyzes with equal efficiency cytidine or uridine to ribose and cytosine or uracil, respectively. The sequence is that of Pyrimidine-specific ribonucleoside hydrolase RihA from Escherichia fergusonii (strain ATCC 35469 / DSM 13698 / CCUG 18766 / IAM 14443 / JCM 21226 / LMG 7866 / NBRC 102419 / NCTC 12128 / CDC 0568-73).